The following is a 419-amino-acid chain: Serine hydroxymethyltransferase (419 aa).

Residues leucine 120 and 124-126 each bind (6S)-5,6,7,8-tetrahydrofolate; that span reads GHL. N6-(pyridoxal phosphate)lysine is present on lysine 229.

This sequence belongs to the SHMT family. In terms of assembly, homodimer. Pyridoxal 5'-phosphate serves as cofactor.

It is found in the cytoplasm. The catalysed reaction is (6R)-5,10-methylene-5,6,7,8-tetrahydrofolate + glycine + H2O = (6S)-5,6,7,8-tetrahydrofolate + L-serine. It participates in one-carbon metabolism; tetrahydrofolate interconversion. The protein operates within amino-acid biosynthesis; glycine biosynthesis; glycine from L-serine: step 1/1. Functionally, catalyzes the reversible interconversion of serine and glycine with tetrahydrofolate (THF) serving as the one-carbon carrier. This reaction serves as the major source of one-carbon groups required for the biosynthesis of purines, thymidylate, methionine, and other important biomolecules. Also exhibits THF-independent aldolase activity toward beta-hydroxyamino acids, producing glycine and aldehydes, via a retro-aldol mechanism. This is Serine hydroxymethyltransferase from Herpetosiphon aurantiacus (strain ATCC 23779 / DSM 785 / 114-95).